A 753-amino-acid polypeptide reads, in one-letter code: 5-methyltetrahydropteroyltriglutamate--homocysteine methyltransferase (753 aa).

5-methyltetrahydropteroyltri-L-glutamate-binding positions include 17-20 (RELK) and lysine 117. L-homocysteine contacts are provided by residues 431–433 (IGS) and glutamate 484. Residues 431–433 (IGS) and glutamate 484 each bind L-methionine. 5-methyltetrahydropteroyltri-L-glutamate is bound by residues 515–516 (RC) and tryptophan 561. Aspartate 599 serves as a coordination point for L-homocysteine. Residue aspartate 599 participates in L-methionine binding. Position 605 (glutamate 605) interacts with 5-methyltetrahydropteroyltri-L-glutamate. Residues histidine 641, cysteine 643, and glutamate 665 each coordinate Zn(2+). The Proton donor role is filled by histidine 694. Residue cysteine 726 coordinates Zn(2+).

Belongs to the vitamin-B12 independent methionine synthase family. It depends on Zn(2+) as a cofactor.

The enzyme catalyses 5-methyltetrahydropteroyltri-L-glutamate + L-homocysteine = tetrahydropteroyltri-L-glutamate + L-methionine. It participates in amino-acid biosynthesis; L-methionine biosynthesis via de novo pathway; L-methionine from L-homocysteine (MetE route): step 1/1. In terms of biological role, catalyzes the transfer of a methyl group from 5-methyltetrahydrofolate to homocysteine resulting in methionine formation. This Escherichia fergusonii (strain ATCC 35469 / DSM 13698 / CCUG 18766 / IAM 14443 / JCM 21226 / LMG 7866 / NBRC 102419 / NCTC 12128 / CDC 0568-73) protein is 5-methyltetrahydropteroyltriglutamate--homocysteine methyltransferase.